Reading from the N-terminus, the 510-residue chain is E3 ubiquitin-protein ligase TRIM7 (510 aa).

The RING-type zinc-finger motif lies at 29–81 (CSICLEFFREPVSVECGHSFCRACIMRCWERPGAGTGTATRTLPCPLPCPQCR). The residue at position 106 (Ser-106) is a Phosphoserine; by RPS6KA5. The B box-type zinc finger occupies 124–165 (AAAARCSQHGEQLKLYCQDDGRAICVVCDRAREHRSHAVLPL). Zn(2+) is bound by residues Cys-129, His-132, Cys-151, and His-157. Residues 165-275 (LEEAVQEAKE…SGQIQETAQK (111 aa)) are a coiled coil. Positions 323–510 (LLKKFKEDLQ…STGTYLRIWP (188 aa)) constitute a B30.2/SPRY domain.

The protein belongs to the TRIM/RBCC family. As to quaternary structure, forms homodimers. Interacts with GNIP2. Interacts with GYG1. Interacts with RNF187 (via C-terminus). In terms of processing, phosphorylated at Ser-106 by RPS6KA5/MSK1, which stimulates the ubiquitin ligase activity. Auto-ubiquitinates via 'Lys-63'-linked polyubiquitination. Highly expressed in antigen-presenting cells.

It localises to the nucleus. It is found in the cytoplasm. Its subcellular location is the golgi apparatus. It catalyses the reaction S-ubiquitinyl-[E2 ubiquitin-conjugating enzyme]-L-cysteine + [acceptor protein]-L-lysine = [E2 ubiquitin-conjugating enzyme]-L-cysteine + N(6)-ubiquitinyl-[acceptor protein]-L-lysine.. It functions in the pathway protein modification; protein ubiquitination. Functionally, E3 ubiquitin-protein ligase that have both tumor-promoting and tumor-suppressing activities and functions in several biological processes including innate immunity, regulation of ferroptosis as well as cell proliferation and migration. Acts as an antiviral effector against multiple viruses by targeting specific viral proteins for ubiquitination and degradation including norovirus NTPase protein. Mechanistically, recognizes the C-terminal glutamine-containing motif generated by viral proteases that process the polyproteins and trigger their ubiquitination and subsequent degradation. Mediates 'Lys-63'-linked polyubiquitination and stabilization of the JUN coactivator RNF187 in response to growth factor signaling via the MEK/ERK pathway, thereby regulating JUN transactivation and cellular proliferation. Promotes the TLR4-mediated signaling activation through its E3 ligase domain leading to production of pro-inflammatory cytokines and type I interferon. Also plays a negative role in the regulation of exogenous cytosolic DNA virus-triggered immune response. Mechanistically, enhances the 'Lys-48'-linked ubiquitination of STING1 leading to its proteasome-dependent degradation. Mediates the ubiquitination of the SIN3-HDAC chromatin remodeling complex component BRMS1. Modulates NCOA4-mediated ferritinophagy and ferroptosis in glioblastoma cells by ubiquitinating NCOA4, leading to its degradation. In Mus musculus (Mouse), this protein is E3 ubiquitin-protein ligase TRIM7 (Trim7).